Consider the following 619-residue polypeptide: MSLDIAKYPTLALAENPEELRMLPKESLPKLCDELRQYLLTCVSRSSGHFASGLGVVELTVALHYVYNTPFDHLIWDVGHQAYPHKILTGRRDRISTIRQKDGLHPFPWRGESEYDVLSVGHSSTSISAGLGMAVAAEREGKGRRTVCVIGDGAITAGMAFEAMSHAGDIHSDMLVILNDNEMSISENVGGLNNHLAQLLSGKLYASLREGGKKAFSALPPIKDLLKRTEEHLKGMVVPSTLFEELGFNYIGPVDGHDVHTLTQTLKNMRDLKGPQLLHIMTKKGKGYAPAEKDPIGWHAVPKFDPASGTLPKSQSSLPTYSKIFGEWLCETAAKDSKLMAVTPAMREGSGMVRFSREYPQQYFDVAIAEQHAVTFAAGLAIGGYKPVVAIYSTFLQRAYDQLIHDVAIQNLPVLFAIDRGGLVGADGQTHQGAFDLSFMRCIPNMVIMAPSDENECRQMLYTGYHHNGPAAVRYPRGNGTSAVLEPLEMLPIGKGVLRREGEKIAILCFGTLLAQAQLAAENLNATLVDMRFVKPLDEELVLEMAAKHQVLVTVEENAIMGGAGSGVNELLMAKRRWVPVLNIGLPDLFVPQGEQDEMRSELGLDAAGIQRQIEAWLA.

Thiamine diphosphate-binding positions include histidine 80 and 121 to 123 (GHS). Aspartate 152 serves as a coordination point for Mg(2+). Residues 153–154 (GA), asparagine 181, tyrosine 288, and glutamate 370 each bind thiamine diphosphate. Asparagine 181 is a Mg(2+) binding site.

It belongs to the transketolase family. DXPS subfamily. As to quaternary structure, homodimer. Mg(2+) is required as a cofactor. It depends on thiamine diphosphate as a cofactor.

It carries out the reaction D-glyceraldehyde 3-phosphate + pyruvate + H(+) = 1-deoxy-D-xylulose 5-phosphate + CO2. The protein operates within metabolic intermediate biosynthesis; 1-deoxy-D-xylulose 5-phosphate biosynthesis; 1-deoxy-D-xylulose 5-phosphate from D-glyceraldehyde 3-phosphate and pyruvate: step 1/1. In terms of biological role, catalyzes the acyloin condensation reaction between C atoms 2 and 3 of pyruvate and glyceraldehyde 3-phosphate to yield 1-deoxy-D-xylulose-5-phosphate (DXP). The chain is 1-deoxy-D-xylulose-5-phosphate synthase from Yersinia pseudotuberculosis serotype O:3 (strain YPIII).